The following is a 357-amino-acid chain: SPbeta prophage-derived pesticidal crystal protein-like YokG (357 aa).

Belongs to the cry6A endotoxin family.

This Bacillus subtilis (strain 168) protein is SPbeta prophage-derived pesticidal crystal protein-like YokG (yokG).